Here is a 255-residue protein sequence, read N- to C-terminus: Testis-specific H1 histone (255 aa).

Residues 1 to 54 (MEQALTGEAQSRWPRRGGSGAMAEAPGPSGESRGHSATQLPAEKTVGGPSRGCS) are disordered. Position 56 is a phosphoserine (S56). The segment covering 124 to 134 (KVPKPRRKPGR) has biased composition (basic residues). Positions 124–255 (KVPKPRRKPG…PKKPAQRTIQ (132 aa)) are disordered. Over residues 142-152 (RAPWRTPAAPR) the composition is skewed to low complexity. 2 stretches are compositionally biased toward basic residues: residues 153–166 (SSRR…KAAR) and 174–194 (RNAR…RARP). Basic and acidic residues-rich tracts occupy residues 195 to 230 (RAKE…PRSG) and 238 to 248 (KPREEKQEPKK).

Belongs to the histone H1/H5 family. As to expression, testis-specific.

Its subcellular location is the nucleus. It localises to the chromosome. Its function is as follows. Essential for normal spermatogenesis and male fertility. Required for proper cell restructuring and DNA condensation during the elongation phase of spermiogenesis. Involved in the histone-protamine transition of sperm chromatin and the subsequent production of functional sperm. Binds both double-stranded and single-stranded DNA, ATP and protamine-1. This Homo sapiens (Human) protein is Testis-specific H1 histone.